The following is a 505-amino-acid chain: Maturase K (505 aa).

This sequence belongs to the intron maturase 2 family. MatK subfamily.

It is found in the plastid. Its subcellular location is the chloroplast. Functionally, usually encoded in the trnK tRNA gene intron. Probably assists in splicing its own and other chloroplast group II introns. The polypeptide is Maturase K (Rosa stellata (Star rose)).